A 289-amino-acid polypeptide reads, in one-letter code: Acetyl-coenzyme A carboxylase carboxyl transferase subunit beta (289 aa).

Positions 28–289 constitute a CoA carboxyltransferase N-terminal domain; it reads LWSKCPSCEA…ALLQKLPAAA (262 aa). 4 residues coordinate Zn(2+): Cys32, Cys35, Cys51, and Cys54. The C4-type zinc finger occupies 32 to 54; it reads CPSCEAVLYATDLENNLQVCPKC.

This sequence belongs to the AccD/PCCB family. Acetyl-CoA carboxylase is a heterohexamer composed of biotin carboxyl carrier protein (AccB), biotin carboxylase (AccC) and two subunits each of ACCase subunit alpha (AccA) and ACCase subunit beta (AccD). It depends on Zn(2+) as a cofactor.

The protein resides in the cytoplasm. It carries out the reaction N(6)-carboxybiotinyl-L-lysyl-[protein] + acetyl-CoA = N(6)-biotinyl-L-lysyl-[protein] + malonyl-CoA. The protein operates within lipid metabolism; malonyl-CoA biosynthesis; malonyl-CoA from acetyl-CoA: step 1/1. Component of the acetyl coenzyme A carboxylase (ACC) complex. Biotin carboxylase (BC) catalyzes the carboxylation of biotin on its carrier protein (BCCP) and then the CO(2) group is transferred by the transcarboxylase to acetyl-CoA to form malonyl-CoA. In Dechloromonas aromatica (strain RCB), this protein is Acetyl-coenzyme A carboxylase carboxyl transferase subunit beta.